Here is a 471-residue protein sequence, read N- to C-terminus: ATP synthase subunit beta (471 aa).

159–166 (GGAGVGKT) is a binding site for ATP.

This sequence belongs to the ATPase alpha/beta chains family. In terms of assembly, F-type ATPases have 2 components, CF(1) - the catalytic core - and CF(0) - the membrane proton channel. CF(1) has five subunits: alpha(3), beta(3), gamma(1), delta(1), epsilon(1). CF(0) has four main subunits: a(1), b(1), b'(1) and c(9-12).

It localises to the cell membrane. The enzyme catalyses ATP + H2O + 4 H(+)(in) = ADP + phosphate + 5 H(+)(out). Functionally, produces ATP from ADP in the presence of a proton gradient across the membrane. The catalytic sites are hosted primarily by the beta subunits. The chain is ATP synthase subunit beta from Heliobacterium modesticaldum (strain ATCC 51547 / Ice1).